We begin with the raw amino-acid sequence, 727 residues long: Protein EXECUTER 1, chloroplastic (727 aa).

Disordered regions lie at residues 1 to 51 (MAAA…SRLF), 65 to 102 (LAGAAPAPAPRRRVSSVVRCGGGGGGVRSPDDADAGSG), 340 to 381 (ISSS…LPSD), and 413 to 455 (DEDD…SGDE). The transit peptide at 1–83 (MAAAVSTAPR…PRRRVSSVVR (83 aa)) directs the protein to the chloroplast. Low complexity-rich tracts occupy residues 19–33 (SSSCCSSSSSSASMS) and 42–51 (PSSGSGSRLF). A compositionally biased stretch (acidic residues) spans 413–441 (DEDDENDNPEDEIESSEDIGDGDNVEEAE).

It localises to the plastid. The protein localises to the chloroplast. Functionally, together with EX2, enables higher plants to perceive singlet oxygen as a stress signal in plastid that activates a genetically determined nuclear stress response program which triggers a programmed cell death (PCD). This transfer of singlet oxygen-induced stress-related signals from the plastid to the nucleus that triggers genetically controlled PCD pathway is unique to photosynthetic eukaryotes and operates under mild stress conditions, impeding photosystem II (PSII) without causing photooxidative damage of the plant. The sequence is that of Protein EXECUTER 1, chloroplastic from Oryza sativa subsp. japonica (Rice).